The chain runs to 101 residues: Urease subunit beta (101 aa).

It belongs to the urease beta subunit family. In terms of assembly, heterotrimer of UreA (gamma), UreB (beta) and UreC (alpha) subunits. Three heterotrimers associate to form the active enzyme.

It is found in the cytoplasm. The enzyme catalyses urea + 2 H2O + H(+) = hydrogencarbonate + 2 NH4(+). Its pathway is nitrogen metabolism; urea degradation; CO(2) and NH(3) from urea (urease route): step 1/1. The polypeptide is Urease subunit beta (Burkholderia pseudomallei (strain 668)).